Reading from the N-terminus, the 215-residue chain is Ribonuclease T (215 aa).

An Exonuclease domain is found at 20–194; sequence VVIDVETAGF…YDTLQTAKLF (175 aa). Residues aspartate 23, glutamate 25, histidine 181, and aspartate 186 each coordinate Mg(2+). Residue histidine 181 is the Proton donor/acceptor of the active site.

The protein belongs to the RNase T family. As to quaternary structure, homodimer. Mg(2+) is required as a cofactor.

Trims short 3' overhangs of a variety of RNA species, leaving a one or two nucleotide 3' overhang. Responsible for the end-turnover of tRNA: specifically removes the terminal AMP residue from uncharged tRNA (tRNA-C-C-A). Also appears to be involved in tRNA biosynthesis. This Yersinia pseudotuberculosis serotype O:1b (strain IP 31758) protein is Ribonuclease T.